Consider the following 106-residue polypeptide: Large ribosomal subunit protein bL21 (106 aa).

This sequence belongs to the bacterial ribosomal protein bL21 family. Part of the 50S ribosomal subunit. Contacts protein L20.

In terms of biological role, this protein binds to 23S rRNA in the presence of protein L20. In Xylella fastidiosa (strain Temecula1 / ATCC 700964), this protein is Large ribosomal subunit protein bL21.